The following is a 130-amino-acid chain: Small ribosomal subunit protein uS9 (130 aa).

The protein belongs to the universal ribosomal protein uS9 family.

The protein is Small ribosomal subunit protein uS9 of Shewanella denitrificans (strain OS217 / ATCC BAA-1090 / DSM 15013).